We begin with the raw amino-acid sequence, 470 residues long: Acetyl-CoA decarbonylase/synthase complex subunit gamma 2 (470 aa).

A 4Fe-4S domain is found at 1 to 60 (MKINSPLEAYKYLPQTNCGECGQPTCMAFASTLIDRSGKTTDCPPLIKEKKFAKKLAELD). [4Fe-4S] cluster-binding residues include Cys-18, Cys-21, Cys-26, and Cys-43.

In terms of assembly, heterodimer of delta and gamma chains. The ACDS complex is made up of alpha, epsilon, beta, gamma and delta chains with a probable stoichiometry of (alpha(2)epsilon(2))(4)-beta(8)-(gamma(1)delta(1))(8). It depends on corrinoid as a cofactor. Requires [4Fe-4S] cluster as cofactor.

The enzyme catalyses 5,6,7,8-tetrahydrosarcinapterin + methyl-Co(III)-[corrinoid Fe-S protein] = 5-methyltetrahydrosarcinapterin + Co(I)-[corrinoid Fe-S protein] + H(+). The protein operates within one-carbon metabolism; methanogenesis from acetate. Functionally, part of a complex that catalyzes the reversible cleavage of acetyl-CoA, allowing growth on acetate as sole source of carbon and energy. The polypeptide is Acetyl-CoA decarbonylase/synthase complex subunit gamma 2 (Methanosarcina mazei (strain ATCC BAA-159 / DSM 3647 / Goe1 / Go1 / JCM 11833 / OCM 88) (Methanosarcina frisia)).